Consider the following 2282-residue polypeptide: Cation channel sperm-associated targeting subunit tau (2282 aa).

A disordered region spans residues 1–118; that stretch reads MELPPPGNRR…RGKGKGTGTR (118 aa). Polar residues-rich tracts occupy residues 11–41 and 50–87; these read VSIN…SLKR and MMSN…NLSS. A compositionally biased stretch (basic and acidic residues) spans 90 to 109; it reads YADEEGKPLTDKNKDKDKGR. The 136-residue stretch at 131–266 folds into the C2 domain; it reads QSDEMAIANQ…IQKGCFTEVM (136 aa). Disordered regions lie at residues 397-416, 656-679, 747-1066, 1104-1153, 1217-1240, 1426-1445, 1452-1515, 1542-1569, 1908-1928, and 2187-2222; these read MTKR…SSAL, EHED…TWAE, NKLI…SHDP, SAKS…DKQS, YTND…TDDR, NSLL…DSRS, RQNT…SLDK, ERRQ…LEKT, NQAN…LKKQ, and PKKS…EPNK. Polar residues-rich tracts occupy residues 750 to 760, 783 to 792, 800 to 841, 849 to 858, and 953 to 974; these read ITDSSFNTTKP, SDPSSNTTKP, DPSS…SDLN, IVSTISSDPN, and SARS…TKLS. Residues 1104–1123 show a composition bias toward low complexity; the sequence is SAKSLDSNNSSASSSPTVNS. Residues 1124–1136 are compositionally biased toward polar residues; that stretch reads DTTTNAAEPSGTK. Composition is skewed to polar residues over residues 1452–1466 and 1473–1482; these read RQNT…SSVS and DCQSISTQES. The span at 1484–1493 shows a compositional bias: basic and acidic residues; the sequence is YPVRDTKSDS. The segment covering 1495 to 1504 has biased composition (acidic residues); the sequence is NDTEEMELDS. Basic and acidic residues-rich tracts occupy residues 1542-1555 and 1916-1925; these read ERRQ…ESLI and SPERPSDISL.

In terms of assembly, component of the CatSper complex or CatSpermasome composed of the core pore-forming members CATSPER1, CATSPER2, CATSPER3 and CATSPER4 as well as auxiliary members CATSPERB, CATSPERG, CATSPERD, CATSPERE, CATSPERZ, C2CD6/CATSPERT, SLCO6C1, TMEM249, TMEM262 and EFCAB9. HSPA1 may be an additional auxiliary complex member. The core complex members CATSPER1, CATSPER2, CATSPER3 and CATSPER4 form a heterotetrameric channel. The auxiliary CATSPERB, CATSPERG, CATSPERD and CATSPERE subunits form a pavilion-like structure over the pore which stabilizes the complex through interactions with CATSPER4, CATSPER3, CATSPER1 and CATSPER2 respectively. SLCO6C1 interacts with CATSPERE and TMEM262/CATSPERH interacts with CATSPERB, further stabilizing the complex. C2CD6/CATSPERT interacts at least with CATSPERD and is required for targeting the CatSper complex in the flagellar membrane. As to expression, expressed in cauda sperm (at protein level).

The protein localises to the cell projection. Its subcellular location is the cilium. It is found in the flagellum membrane. Functionally, auxiliary component of the CatSper complex, a complex involved in sperm cell hyperactivation. Sperm cell hyperactivation is needed for sperm motility which is essential late in the preparation of sperm for fertilization. Required for CatSper complex targeting and trafficking into the quadrilinear nanodomains. Targets the preassembled CatSper complexes to elongating flagella, where it links the channel-carrying vesicles and motor proteins. The protein is Cation channel sperm-associated targeting subunit tau of Mus musculus (Mouse).